The following is a 395-amino-acid chain: uncharacterized protein (395 aa).

Disordered regions lie at residues 185–282 (RREV…SSTA) and 316–372 (GSST…TCSS). The span at 248-257 (LHLRTRHPHR) shows a compositional bias: basic residues. Over residues 342-360 (ARASTHSRSSPSASANSRY) the composition is skewed to low complexity.

This is an uncharacterized protein from Streptomyces fradiae (Streptomyces roseoflavus).